The primary structure comprises 224 residues: MKKAVILVSGGADSATVLAIAREMGYEIHAMSFNYGQRNNAELRKVKELIKEYNVKQHKIVYIDLRAFGGSALTDNNIDVPHYHDVNELPEDVPVTYVPARNTIFLSYALGYAEVIGAKDIFIGVHTSDSANYPDCRPEYIKSFEEMANLATNIGNRITIHTPLIDMAKEQIIKTGLELGVDYKNTISCYDPTEDDLSCGNCLACMIRLDAFKKNNVQDPINYV.

8–18 (VSGGADSATVL) contacts ATP. Zn(2+) contacts are provided by cysteine 189, cysteine 199, cysteine 202, and cysteine 205.

Belongs to the QueC family. Requires Zn(2+) as cofactor.

It catalyses the reaction 7-carboxy-7-deazaguanine + NH4(+) + ATP = 7-cyano-7-deazaguanine + ADP + phosphate + H2O + H(+). Its pathway is purine metabolism; 7-cyano-7-deazaguanine biosynthesis. In terms of biological role, catalyzes the ATP-dependent conversion of 7-carboxy-7-deazaguanine (CDG) to 7-cyano-7-deazaguanine (preQ(0)). In Rickettsia felis (strain ATCC VR-1525 / URRWXCal2) (Rickettsia azadi), this protein is 7-cyano-7-deazaguanine synthase.